The chain runs to 264 residues: Methionine aminopeptidase (264 aa).

H79 contacts substrate. D97, D108, and H171 together coordinate a divalent metal cation. H178 provides a ligand contact to substrate. Positions 204 and 235 each coordinate a divalent metal cation.

It belongs to the peptidase M24A family. Methionine aminopeptidase type 1 subfamily. In terms of assembly, monomer. Requires Co(2+) as cofactor. Zn(2+) serves as cofactor. Mn(2+) is required as a cofactor. It depends on Fe(2+) as a cofactor.

The enzyme catalyses Release of N-terminal amino acids, preferentially methionine, from peptides and arylamides.. Removes the N-terminal methionine from nascent proteins. The N-terminal methionine is often cleaved when the second residue in the primary sequence is small and uncharged (Met-Ala-, Cys, Gly, Pro, Ser, Thr, or Val). Requires deformylation of the N(alpha)-formylated initiator methionine before it can be hydrolyzed. This Escherichia coli O157:H7 protein is Methionine aminopeptidase.